The chain runs to 1499 residues: DENN domain-containing protein 4B (1499 aa).

A disordered region spans residues 26–45 (PEEKWVPEPTGPLRPPRPAE). Pro residues predominate over residues 34-44 (PTGPLRPPRPA). The region spanning 44–203 (AEPITDVAVI…AVYLCYKVGL (160 aa)) is the MABP domain. The uDENN domain occupies 195–369 (VYLCYKVGLA…NVPFPSPQRP (175 aa)). The cDENN domain occupies 390 to 526 (PLPLSGASFL…PYKLLLATLT (137 aa)). The 117-residue stretch at 528-644 (LYQQLDQTYT…ECSFGSARHA (117 aa)) folds into the dDENN domain. Residues 717-744 (PQEQQGALPVPGPSRSAPSSPAPRRTKQ) are disordered. The span at 729–739 (PSRSAPSSPAP) shows a compositional bias: low complexity. 2 PPR repeats span residues 775–811 (WFLC…VVLP) and 812–846 (DEVC…GIVP). 3 disordered regions span residues 890–968 (PLKD…ARGT), 988–1115 (PRGS…SLGS), and 1204–1226 (RPSA…APAP). A compositionally biased stretch (low complexity) spans 897–915 (QQQQQQQQQQQKQQVAEQQ). Polar residues predominate over residues 933–942 (RPLQRQTTWA). Residue serine 951 is modified to Phosphoserine. Pro residues predominate over residues 1074–1083 (IPPPELPSDL). Serine 1090 carries the phosphoserine modification. Over residues 1103–1115 (GSTASESSASLGS) the composition is skewed to low complexity.

Its subcellular location is the golgi apparatus. In terms of biological role, guanine nucleotide exchange factor (GEF) which may activate RAB10. Promotes the exchange of GDP to GTP, converting inactive GDP-bound Rab proteins into their active GTP-bound form. The sequence is that of DENN domain-containing protein 4B (Dennd4b) from Mus musculus (Mouse).